Here is a 360-residue protein sequence, read N- to C-terminus: MTFHEEDLDQAEEVHVRSLTAAEADGDERAVEAALRPRTLDEVVGQVRVRDQLGLVLEAARRRGRAPDHVLLSGPPGLGKTTLAMIIASEMGAPLRLTSGPAITHAGDLAAILSGMNEGDVLFVDEIHRMSRPAEEMLYMAMEDFRVDVVIGKGPGATAIPLEIPPFTLVGATTRAGLLPGPLRDRFGFTAHLEFYEPDELDLIVQRSARLLDVHVLPDGTAEIASRSRGTPRIANRLLRRVRDFAQVRADGVVTLPVAQDALDLYEVDQLGLDRLDRGVLDVLCRRFGGGPVGISTLAVAVGEERETVEEVAEPFLVRNGFLARTPRGRVATPAAWEHLGLTAPPTLTLPESDPPLFED.

The interval 4 to 196 (HEEDLDQAEE…FGFTAHLEFY (193 aa)) is large ATPase domain (RuvB-L). Residues leucine 35, arginine 36, glycine 77, lysine 80, threonine 81, threonine 82, 143 to 145 (EDF), arginine 186, tyrosine 196, and arginine 233 contribute to the ATP site. Threonine 81 provides a ligand contact to Mg(2+). The segment at 197-267 (EPDELDLIVQ…VAQDALDLYE (71 aa)) is small ATPAse domain (RuvB-S). The tract at residues 270 to 360 (QLGLDRLDRG…PESDPPLFED (91 aa)) is head domain (RuvB-H). Positions 306, 325, and 330 each coordinate DNA.

Belongs to the RuvB family. In terms of assembly, homohexamer. Forms an RuvA(8)-RuvB(12)-Holliday junction (HJ) complex. HJ DNA is sandwiched between 2 RuvA tetramers; dsDNA enters through RuvA and exits via RuvB. An RuvB hexamer assembles on each DNA strand where it exits the tetramer. Each RuvB hexamer is contacted by two RuvA subunits (via domain III) on 2 adjacent RuvB subunits; this complex drives branch migration. In the full resolvosome a probable DNA-RuvA(4)-RuvB(12)-RuvC(2) complex forms which resolves the HJ.

It localises to the cytoplasm. The catalysed reaction is ATP + H2O = ADP + phosphate + H(+). The RuvA-RuvB-RuvC complex processes Holliday junction (HJ) DNA during genetic recombination and DNA repair, while the RuvA-RuvB complex plays an important role in the rescue of blocked DNA replication forks via replication fork reversal (RFR). RuvA specifically binds to HJ cruciform DNA, conferring on it an open structure. The RuvB hexamer acts as an ATP-dependent pump, pulling dsDNA into and through the RuvAB complex. RuvB forms 2 homohexamers on either side of HJ DNA bound by 1 or 2 RuvA tetramers; 4 subunits per hexamer contact DNA at a time. Coordinated motions by a converter formed by DNA-disengaged RuvB subunits stimulates ATP hydrolysis and nucleotide exchange. Immobilization of the converter enables RuvB to convert the ATP-contained energy into a lever motion, pulling 2 nucleotides of DNA out of the RuvA tetramer per ATP hydrolyzed, thus driving DNA branch migration. The RuvB motors rotate together with the DNA substrate, which together with the progressing nucleotide cycle form the mechanistic basis for DNA recombination by continuous HJ branch migration. Branch migration allows RuvC to scan DNA until it finds its consensus sequence, where it cleaves and resolves cruciform DNA. The protein is Holliday junction branch migration complex subunit RuvB of Nocardioides sp. (strain ATCC BAA-499 / JS614).